The sequence spans 172 residues: Shikimate kinase (172 aa).

ATP is bound at residue 11-16 (GAGKST). A Mg(2+)-binding site is contributed by Ser15. Residues Asp33, Arg57, and Gly79 each coordinate substrate. Position 117 (Arg117) interacts with ATP. Arg136 lines the substrate pocket. Arg153 contributes to the ATP binding site.

It belongs to the shikimate kinase family. In terms of assembly, monomer. Mg(2+) is required as a cofactor.

It localises to the cytoplasm. It catalyses the reaction shikimate + ATP = 3-phosphoshikimate + ADP + H(+). It functions in the pathway metabolic intermediate biosynthesis; chorismate biosynthesis; chorismate from D-erythrose 4-phosphate and phosphoenolpyruvate: step 5/7. Catalyzes the specific phosphorylation of the 3-hydroxyl group of shikimic acid using ATP as a cosubstrate. This is Shikimate kinase from Pseudomonas savastanoi pv. phaseolicola (strain 1448A / Race 6) (Pseudomonas syringae pv. phaseolicola (strain 1448A / Race 6)).